The primary structure comprises 123 residues: Large ribosomal subunit protein bL19c (123 aa).

The protein belongs to the bacterial ribosomal protein bL19 family.

It localises to the plastid. The protein resides in the chloroplast. This is Large ribosomal subunit protein bL19c (rpl19) from Porphyra purpurea (Red seaweed).